Reading from the N-terminus, the 314-residue chain is DNA topoisomerase 1 (314 aa).

In terms of domain architecture, Topo IB-type catalytic spans 73 to 314 (GKMHVQRRNS…TDYITNTQTV (242 aa)). Tyr273 (O-(3'-phospho-DNA)-tyrosine intermediate) is an active-site residue.

It belongs to the type IB topoisomerase family.

The catalysed reaction is ATP-independent breakage of single-stranded DNA, followed by passage and rejoining.. Functionally, releases the supercoiling and torsional tension of DNA introduced during the DNA replication and transcription by transiently cleaving and rejoining one strand of the DNA duplex. Introduces a single-strand break via transesterification at a target site in duplex DNA. The scissile phosphodiester is attacked by the catalytic tyrosine of the enzyme, resulting in the formation of a DNA-(3'-phosphotyrosyl)-enzyme intermediate and the expulsion of a 5'-OH DNA strand. The free DNA strand then undergoes passage around the unbroken strand thus removing DNA supercoils. Finally, in the religation step, the DNA 5'-OH attacks the covalent intermediate to expel the active-site tyrosine and restore the DNA phosphodiester backbone. The protein is DNA topoisomerase 1 (TOP1) of Oryctolagus cuniculus (Rabbit).